A 106-amino-acid polypeptide reads, in one-letter code: BLOC-1-related complex subunit 7 (106 aa).

This sequence belongs to the BORCS7 family. Component of the BLOC-one-related complex (BORC) which is composed of BLOC1S1, BLOC1S2, BORCS5, BORCS6, BORCS7, BORCS8, KXD1 and SNAPIN.

It localises to the lysosome membrane. Its function is as follows. As part of the BORC complex may play a role in lysosomes movement and localization at the cell periphery. Associated with the cytosolic face of lysosomes, the BORC complex may recruit ARL8B and couple lysosomes to microtubule plus-end-directed kinesin motor. This is BLOC-1-related complex subunit 7 from Homo sapiens (Human).